The primary structure comprises 302 residues: Probable alpha-L-glutamate ligase (302 aa).

One can recognise an ATP-grasp domain in the interval 112-294 (LQLLLKTGVP…IAAEIIDYIE (183 aa)). ATP contacts are provided by residues lysine 148, 185–186 (DF), aspartate 194, and 218–220 (RAN). Mg(2+)-binding residues include aspartate 255, glutamate 267, and asparagine 269. Mn(2+) is bound by residues aspartate 255, glutamate 267, and asparagine 269.

This sequence belongs to the RimK family. Mg(2+) is required as a cofactor. Mn(2+) serves as cofactor.

This Haemophilus influenzae (strain 86-028NP) protein is Probable alpha-L-glutamate ligase.